The following is a 295-amino-acid chain: Indole-3-glycerol phosphate synthase (295 aa).

The protein belongs to the TrpC family.

It carries out the reaction 1-(2-carboxyphenylamino)-1-deoxy-D-ribulose 5-phosphate + H(+) = (1S,2R)-1-C-(indol-3-yl)glycerol 3-phosphate + CO2 + H2O. The protein operates within amino-acid biosynthesis; L-tryptophan biosynthesis; L-tryptophan from chorismate: step 4/5. The protein is Indole-3-glycerol phosphate synthase of Synechococcus sp. (strain CC9605).